The chain runs to 103 residues: Large ribosomal subunit protein bL21 (103 aa).

It belongs to the bacterial ribosomal protein bL21 family. In terms of assembly, part of the 50S ribosomal subunit. Contacts protein L20.

This protein binds to 23S rRNA in the presence of protein L20. This is Large ribosomal subunit protein bL21 from Ectopseudomonas mendocina (strain ymp) (Pseudomonas mendocina).